Consider the following 138-residue polypeptide: Putative pre-16S rRNA nuclease (138 aa).

It belongs to the YqgF nuclease family.

The protein localises to the cytoplasm. Could be a nuclease involved in processing of the 5'-end of pre-16S rRNA. The protein is Putative pre-16S rRNA nuclease of Geobacillus kaustophilus (strain HTA426).